Here is an 875-residue protein sequence, read N- to C-terminus: Neurotrypsin (875 aa).

A signal peptide spans 1–20 (MTLARFALALLFGVLPEVVG). Residue Asn-26 is glycosylated (N-linked (GlcNAc...) asparagine). The tract at residues 51–72 (QRHRRTRPPPPLPRFPRPPRAL) is disordered. Pro residues predominate over residues 58–71 (PPPPLPRFPRPPRA). A Kringle domain is found at 93-165 (CPAGEPWVSV…GKVDWGYCDC (73 aa)). 20 cysteine pairs are disulfide-bonded: Cys-93/Cys-165, Cys-109/Cys-149, Cys-138/Cys-163, Cys-195/Cys-259, Cys-208/Cys-269, Cys-239/Cys-249, Cys-305/Cys-369, Cys-318/Cys-379, Cys-349/Cys-359, Cys-412/Cys-475, Cys-425/Cys-485, Cys-455/Cys-465, Cys-525/Cys-589, Cys-538/Cys-599, Cys-569/Cys-579, Cys-619/Cys-750, Cys-661/Cys-677, Cys-765/Cys-831, Cys-794/Cys-808, and Cys-821/Cys-850. SRCR domains lie at 170 to 271 (VRLR…MCSF), 280 to 381 (IRLV…SCTP), 387 to 487 (IRLA…ACYP), and 500 to 601 (VRLM…ICDY). Positions 619-630 (CGLRLLHRRQKR) are zymogen activation region. The region spanning 631 to 874 (IIGGKNSLRG…FVPWIKSVTK (244 aa)) is the Peptidase S1 domain. His-676 functions as the Charge relay system in the catalytic mechanism. Asn-683 carries N-linked (GlcNAc...) asparagine glycosylation. Asp-726 functions as the Charge relay system in the catalytic mechanism. The active-site Charge relay system is Ser-825.

The protein belongs to the peptidase S1 family.

The protein localises to the secreted. Plays a role in neuronal plasticity and the proteolytic action may subserve structural reorganizations associated with learning and memory operations. The chain is Neurotrypsin (PRSS12) from Saguinus labiatus (Red-chested mustached tamarin).